The following is a 329-amino-acid chain: MVKTQRVVITPGEPAGIGPDLIVQLAQREWPVELVVCADATLLTDRAAMLGLPLTLRPYSPNSPAQPQTAGTLTLLPVALRESVTAGQLAVENGHYVVETLARACDGCLNGEFAALITGPVHKGVINDAGIPFTGHTEFFEERSQAKKVVMMLATEELRVALATTHLPLRDIADAITPALLHEVIAILHHDLRTKFGIAEPRILVCGLNPHAGEGGHMGTEEIDTIIPVLDELRAQGMKLNGPLPADTLFQPKYLDNADAVLAMYHDQGLPVLKYQGFGRGVNITLGLPFIRTSVDHGTALELAGRGKADVGSFITALNLAIKMIVNTQ.

Residues His136 and Thr137 each coordinate substrate. The a divalent metal cation site is built by His166, His211, and His266. Substrate is bound by residues Lys274, Asn283, and Arg292.

It belongs to the PdxA family. In terms of assembly, homodimer. Requires Zn(2+) as cofactor. Mg(2+) serves as cofactor. The cofactor is Co(2+).

Its subcellular location is the cytoplasm. It carries out the reaction 4-(phosphooxy)-L-threonine + NAD(+) = 3-amino-2-oxopropyl phosphate + CO2 + NADH. It participates in cofactor biosynthesis; pyridoxine 5'-phosphate biosynthesis; pyridoxine 5'-phosphate from D-erythrose 4-phosphate: step 4/5. Its function is as follows. Catalyzes the NAD(P)-dependent oxidation of 4-(phosphooxy)-L-threonine (HTP) into 2-amino-3-oxo-4-(phosphooxy)butyric acid which spontaneously decarboxylates to form 3-amino-2-oxopropyl phosphate (AHAP). In Escherichia coli O7:K1 (strain IAI39 / ExPEC), this protein is 4-hydroxythreonine-4-phosphate dehydrogenase.